We begin with the raw amino-acid sequence, 404 residues long: Tryptophan synthase beta chain (404 aa).

Residue lysine 99 is modified to N6-(pyridoxal phosphate)lysine.

This sequence belongs to the TrpB family. As to quaternary structure, tetramer of two alpha and two beta chains. Pyridoxal 5'-phosphate is required as a cofactor.

The catalysed reaction is (1S,2R)-1-C-(indol-3-yl)glycerol 3-phosphate + L-serine = D-glyceraldehyde 3-phosphate + L-tryptophan + H2O. Its pathway is amino-acid biosynthesis; L-tryptophan biosynthesis; L-tryptophan from chorismate: step 5/5. Its function is as follows. The beta subunit is responsible for the synthesis of L-tryptophan from indole and L-serine. This is Tryptophan synthase beta chain from Rhizobium rhizogenes (strain K84 / ATCC BAA-868) (Agrobacterium radiobacter).